The primary structure comprises 236 residues: Protein N-lysine methyltransferase METTL21A (236 aa).

S-adenosyl-L-methionine-binding positions include tryptophan 47, 73 to 75, aspartate 112, tryptophan 143, and alanine 161; that span reads GAG.

This sequence belongs to the methyltransferase superfamily. METTL21 family. As to quaternary structure, interacts with heat shock 70 family members; at least some of these proteins are methylation substrates.

It localises to the cytoplasm. The catalysed reaction is L-lysyl-[protein] + 3 S-adenosyl-L-methionine = N(6),N(6),N(6)-trimethyl-L-lysyl-[protein] + 3 S-adenosyl-L-homocysteine + 3 H(+). Its function is as follows. Protein-lysine methyltransferase that selectively trimethylates residues in heat shock protein 70 (HSP70) family members. Contributes to the in vivo trimethylation of Lys residues in HSPA1 and HSPA8. In vitro methylates 'Lys-561' in HSPA1, 'Lys-564' in HSPA2, 'Lys-585' in HSPA5, 'Lys-563' in HSPA6 and 'Lys-561' in HSPA8. The chain is Protein N-lysine methyltransferase METTL21A (METTL21A) from Pongo abelii (Sumatran orangutan).